The following is a 259-amino-acid chain: UPF0246 protein PFL_1025 (259 aa).

This sequence belongs to the UPF0246 family.

This Pseudomonas fluorescens (strain ATCC BAA-477 / NRRL B-23932 / Pf-5) protein is UPF0246 protein PFL_1025.